Consider the following 124-residue polypeptide: MATINQLVRKPRKRPVAKSDVPALQSCPQKRGVCTRVYTTTPKKPNSALRKVCRVRLTNGYEVASYIGGEGHNLQEHSVVLIRGGRVKDLPGVRYHTVRGALDTSGVQNRRQGRSKYGTKRPKS.

The segment at 1–23 (MATINQLVRKPRKRPVAKSDVPA) is disordered. Aspartate 89 carries the post-translational modification 3-methylthioaspartic acid. A disordered region spans residues 101 to 124 (ALDTSGVQNRRQGRSKYGTKRPKS). The segment covering 111–124 (RQGRSKYGTKRPKS) has biased composition (basic residues).

This sequence belongs to the universal ribosomal protein uS12 family. Part of the 30S ribosomal subunit. Contacts proteins S8 and S17. May interact with IF1 in the 30S initiation complex.

Functionally, with S4 and S5 plays an important role in translational accuracy. Its function is as follows. Interacts with and stabilizes bases of the 16S rRNA that are involved in tRNA selection in the A site and with the mRNA backbone. Located at the interface of the 30S and 50S subunits, it traverses the body of the 30S subunit contacting proteins on the other side and probably holding the rRNA structure together. The combined cluster of proteins S8, S12 and S17 appears to hold together the shoulder and platform of the 30S subunit. This Chromohalobacter salexigens (strain ATCC BAA-138 / DSM 3043 / CIP 106854 / NCIMB 13768 / 1H11) protein is Small ribosomal subunit protein uS12.